Reading from the N-terminus, the 326-residue chain is Nucleoporin Nup37 (326 aa).

4 WD repeats span residues 70-117, 122-162, 164-203, and 294-325; these read HHGV…KNEY, GHSD…TAHF, LHSPGMSVCWHPEETFKLMVAEKNGTIRFYDLMAQQAILS, and GSVAVGSGLSWHRTLPLCAVGGDHKLLFWVTE.

As to quaternary structure, component of the Nup107-160 subcomplex of the nuclear pore complex (NPC). The Nup107-160 subcomplex includes NUP160, NUP133, NUP107, NUP98, NUP85, NUP43, NUP37, SEH1 and SEC13.

The protein localises to the chromosome. Its subcellular location is the centromere. The protein resides in the kinetochore. It is found in the nucleus. It localises to the nuclear pore complex. Component of the Nup107-160 subcomplex of the nuclear pore complex (NPC). The Nup107-160 subcomplex is required for the assembly of a functional NPC. The Nup107-160 subcomplex is also required for normal kinetochore microtubule attachment, mitotic progression and chromosome segregation. The protein is Nucleoporin Nup37 (Nup37) of Mus musculus (Mouse).